Consider the following 510-residue polypeptide: Lysine--tRNA ligase (510 aa).

Mg(2+) is bound by residues Glu420 and Glu427.

It belongs to the class-II aminoacyl-tRNA synthetase family. Homodimer. Mg(2+) serves as cofactor.

It localises to the cytoplasm. It catalyses the reaction tRNA(Lys) + L-lysine + ATP = L-lysyl-tRNA(Lys) + AMP + diphosphate. The protein is Lysine--tRNA ligase of Ralstonia nicotianae (strain ATCC BAA-1114 / GMI1000) (Ralstonia solanacearum).